A 217-amino-acid chain; its full sequence is 3,4-dihydroxy-2-butanone 4-phosphate synthase (217 aa).

Residues 37-38 (RE), Asp42, 150-154 (RQGHT), and Glu174 contribute to the D-ribulose 5-phosphate site. Residue Glu38 coordinates Mg(2+). His153 is a Mg(2+) binding site.

This sequence belongs to the DHBP synthase family. As to quaternary structure, homodimer. Mg(2+) is required as a cofactor. Mn(2+) serves as cofactor.

The catalysed reaction is D-ribulose 5-phosphate = (2S)-2-hydroxy-3-oxobutyl phosphate + formate + H(+). The protein operates within cofactor biosynthesis; riboflavin biosynthesis; 2-hydroxy-3-oxobutyl phosphate from D-ribulose 5-phosphate: step 1/1. In terms of biological role, catalyzes the conversion of D-ribulose 5-phosphate to formate and 3,4-dihydroxy-2-butanone 4-phosphate. This Photorhabdus laumondii subsp. laumondii (strain DSM 15139 / CIP 105565 / TT01) (Photorhabdus luminescens subsp. laumondii) protein is 3,4-dihydroxy-2-butanone 4-phosphate synthase.